Consider the following 311-residue polypeptide: Pyrimidine-specific ribonucleoside hydrolase RihA (311 aa).

The active site involves His-240.

Belongs to the IUNH family. RihA subfamily.

Its function is as follows. Hydrolyzes with equal efficiency cytidine or uridine to ribose and cytosine or uracil, respectively. The protein is Pyrimidine-specific ribonucleoside hydrolase RihA of Escherichia coli O157:H7.